The primary structure comprises 925 residues: Protein translocase subunit SecA (925 aa).

ATP-binding positions include glutamine 87, 105 to 109, and aspartate 512; that span reads GEGKT. The Zn(2+) site is built by cysteine 910, cysteine 912, cysteine 921, and histidine 922.

The protein belongs to the SecA family. Monomer and homodimer. Part of the essential Sec protein translocation apparatus which comprises SecA, SecYEG and auxiliary proteins SecDF-YajC and YidC. Zn(2+) serves as cofactor.

It is found in the cell inner membrane. The protein resides in the cytoplasm. It catalyses the reaction ATP + H2O + cellular proteinSide 1 = ADP + phosphate + cellular proteinSide 2.. Its function is as follows. Part of the Sec protein translocase complex. Interacts with the SecYEG preprotein conducting channel. Has a central role in coupling the hydrolysis of ATP to the transfer of proteins into and across the cell membrane, serving both as a receptor for the preprotein-SecB complex and as an ATP-driven molecular motor driving the stepwise translocation of polypeptide chains across the membrane. The sequence is that of Protein translocase subunit SecA from Psychrobacter sp. (strain PRwf-1).